The sequence spans 765 residues: Polyadenylate-binding protein, cytoplasmic and nuclear (765 aa).

A compositionally biased stretch (low complexity) spans 1–37; sequence MSADASTTPAADSNVTSTPETSTTPAAPAPEVTAVES. The tract at residues 1-49 is disordered; it reads MSADASTTPAADSNVTSTPETSTTPAAPAPEVTAVESTTAPNASQPHSA. Positions 38–48 are enriched in polar residues; sequence TTAPNASQPHS. 4 consecutive RRM domains span residues 49 to 127, 137 to 214, 230 to 307, and 333 to 470; these read ASLY…WSQR, GNVF…HHIS, TNVY…RAQK, and VNLY…LAQR. Disordered regions lie at residues 364 to 427 and 619 to 657; these read VMRD…ADKK and PGYGQGRGGVPVQQGQMRPGQGGRGQNAAQAPAGRPEEA. Residues 377–427 are compositionally biased toward basic and acidic residues; the sequence is ESDKEKENKEATKENEKESSEAEKAEKTEEKPADSGDEKKEDKESKKADKK. The segment covering 628-637 has biased composition (low complexity); that stretch reads VPVQQGQMRP. Residues 659-736 form the PABC domain; sequence AGGLTAQALS…ALNVYDEYMK (78 aa). The disordered stretch occupies residues 737–765; it reads NKGGESEATGEAAKPKEAAKETSTEENKS. Positions 749 to 765 are enriched in basic and acidic residues; the sequence is AKPKEAAKETSTEENKS.

It belongs to the polyadenylate-binding protein type-1 family.

It is found in the cytoplasm. Its subcellular location is the nucleus. Binds the poly(A) tail of mRNA. Appears to be an important mediator of the multiple roles of the poly(A) tail in mRNA biogenesis, stability and translation. In the nucleus, involved in both mRNA cleavage and polyadenylation. Is also required for efficient mRNA export to the cytoplasm. Acts in concert with a poly(A)-specific nuclease (PAN) to affect poly(A) tail shortening, which may occur concomitantly with either nucleocytoplasmic mRNA transport or translational initiation. In the cytoplasm, stimulates translation initiation and regulates mRNA decay through translation termination-coupled poly(A) shortening, probably mediated by PAN. The polypeptide is Polyadenylate-binding protein, cytoplasmic and nuclear (pab1) (Aspergillus oryzae (strain ATCC 42149 / RIB 40) (Yellow koji mold)).